A 360-amino-acid chain; its full sequence is MRLTRIKAGNFRNFQHLDVQPAAGLNIVRGRNAQGKTNFIEAVFFALRGHSFRSLRDRELVTWGQESAFVEAELEGKDGRTRVRAELNPAGKKIVWAGEPVGKAELAVRLGTVLFTPDDLSLIKGGPRERRRFLDLELGIFVPGYLTALQLYRRALEQRNHLLRMGGGRRYSELLDLWTDEVCKYGMMLLSGRLEILKEFAPLACRLFGAWAGEELAVRYRSSVGLSNGVRTPGAGDLRETLAAVRQDEIRAGQTQAGPHLDDLAFMVNGKEGRPFASQGQQRSVVLALKLAQVFLWKRHTGEAPVVLLDDLLFEFDRERRDKVLETLQNDVQVFITTGERVLSGSRVFCVHSGNIQEES.

Glycine 30–threonine 37 contributes to the ATP binding site.

This sequence belongs to the RecF family.

It is found in the cytoplasm. In terms of biological role, the RecF protein is involved in DNA metabolism; it is required for DNA replication and normal SOS inducibility. RecF binds preferentially to single-stranded, linear DNA. It also seems to bind ATP. This is DNA replication and repair protein RecF from Desulforudis audaxviator (strain MP104C).